Here is a 269-residue protein sequence, read N- to C-terminus: Formamidopyrimidine-DNA glycosylase (269 aa).

P2 functions as the Schiff-base intermediate with DNA in the catalytic mechanism. E3 acts as the Proton donor in catalysis. K57 (proton donor; for beta-elimination activity) is an active-site residue. DNA-binding residues include H90, R109, and K150. The segment at 235 to 269 (RVYGRNGEPCRTCGTPIETAKHGQRSTFFCRRCQK) adopts an FPG-type zinc-finger fold. R259 (proton donor; for delta-elimination activity) is an active-site residue.

It belongs to the FPG family. Monomer. Zn(2+) is required as a cofactor.

It catalyses the reaction Hydrolysis of DNA containing ring-opened 7-methylguanine residues, releasing 2,6-diamino-4-hydroxy-5-(N-methyl)formamidopyrimidine.. It carries out the reaction 2'-deoxyribonucleotide-(2'-deoxyribose 5'-phosphate)-2'-deoxyribonucleotide-DNA = a 3'-end 2'-deoxyribonucleotide-(2,3-dehydro-2,3-deoxyribose 5'-phosphate)-DNA + a 5'-end 5'-phospho-2'-deoxyribonucleoside-DNA + H(+). Functionally, involved in base excision repair of DNA damaged by oxidation or by mutagenic agents. Acts as a DNA glycosylase that recognizes and removes damaged bases. Has a preference for oxidized purines, such as 7,8-dihydro-8-oxoguanine (8-oxoG). Has AP (apurinic/apyrimidinic) lyase activity and introduces nicks in the DNA strand. Cleaves the DNA backbone by beta-delta elimination to generate a single-strand break at the site of the removed base with both 3'- and 5'-phosphates. The polypeptide is Formamidopyrimidine-DNA glycosylase (Pectobacterium carotovorum subsp. carotovorum (strain PC1)).